The following is a 290-amino-acid chain: Protease HtpX (290 aa).

A run of 2 helical transmembrane segments spans residues 4 to 24 (IFLF…TLKL) and 36 to 56 (GSLL…SLFI). Residue His-142 coordinates Zn(2+). Glu-143 is an active-site residue. His-146 serves as a coordination point for Zn(2+). 2 helical membrane passes run 150 to 170 (GDMV…MFFA) and 193 to 213 (FVAT…IVMW). Glu-219 contributes to the Zn(2+) binding site.

It belongs to the peptidase M48B family. It depends on Zn(2+) as a cofactor.

It is found in the cell inner membrane. The sequence is that of Protease HtpX from Stutzerimonas stutzeri (strain A1501) (Pseudomonas stutzeri).